Consider the following 171-residue polypeptide: 3-hydroxyanthranilate 3,4-dioxygenase (171 aa).

R45 contacts O2. Fe cation-binding residues include H49, E55, and H93. Position 55 (E55) interacts with substrate. Residues R97 and E107 each contribute to the substrate site. A divalent metal cation contacts are provided by C122, C125, C159, and C162.

It belongs to the 3-HAO family. Requires Fe(2+) as cofactor.

It localises to the cytoplasm. It catalyses the reaction 3-hydroxyanthranilate + O2 = (2Z,4Z)-2-amino-3-carboxymuconate 6-semialdehyde. Its pathway is cofactor biosynthesis; NAD(+) biosynthesis; quinolinate from L-kynurenine: step 3/3. Its function is as follows. Catalyzes the oxidative ring opening of 3-hydroxyanthranilate to 2-amino-3-carboxymuconate semialdehyde, which spontaneously cyclizes to quinolinate. The polypeptide is 3-hydroxyanthranilate 3,4-dioxygenase (Candida albicans (strain SC5314 / ATCC MYA-2876) (Yeast)).